The primary structure comprises 65 residues: UPF0434 protein HSM_0997 (65 aa).

It belongs to the UPF0434 family.

This is UPF0434 protein HSM_0997 from Histophilus somni (strain 2336) (Haemophilus somnus).